Here is a 354-residue protein sequence, read N- to C-terminus: Fe(3+) ions import ATP-binding protein FbpC (354 aa).

An ABC transporter domain is found at 4–236; it reads LELHAVHKSF…PRDAQTALFL (233 aa). 36-43 contacts ATP; the sequence is GPSGSGKT.

This sequence belongs to the ABC transporter superfamily. Fe(3+) ion importer (TC 3.A.1.10) family. In terms of assembly, the complex is composed of two ATP-binding proteins (FbpC), two transmembrane proteins (FbpB) and a solute-binding protein (FbpA).

It is found in the cell inner membrane. The catalysed reaction is Fe(3+)(out) + ATP + H2O = Fe(3+)(in) + ADP + phosphate + H(+). In terms of biological role, part of the ABC transporter complex FbpABC involved in Fe(3+) ions import. Responsible for energy coupling to the transport system. The sequence is that of Fe(3+) ions import ATP-binding protein FbpC from Pseudomonas fluorescens (strain ATCC BAA-477 / NRRL B-23932 / Pf-5).